A 121-amino-acid chain; its full sequence is Large ribosomal subunit protein uL22 (121 aa).

The protein belongs to the universal ribosomal protein uL22 family. Part of the 50S ribosomal subunit.

This protein binds specifically to 23S rRNA; its binding is stimulated by other ribosomal proteins, e.g. L4, L17, and L20. It is important during the early stages of 50S assembly. It makes multiple contacts with different domains of the 23S rRNA in the assembled 50S subunit and ribosome. Functionally, the globular domain of the protein is located near the polypeptide exit tunnel on the outside of the subunit, while an extended beta-hairpin is found that lines the wall of the exit tunnel in the center of the 70S ribosome. The protein is Large ribosomal subunit protein uL22 of Synechococcus sp. (strain CC9902).